Consider the following 218-residue polypeptide: 3-isopropylmalate dehydratase small subunit (218 aa).

The protein belongs to the LeuD family. LeuD type 1 subfamily. In terms of assembly, heterodimer of LeuC and LeuD.

The catalysed reaction is (2R,3S)-3-isopropylmalate = (2S)-2-isopropylmalate. It participates in amino-acid biosynthesis; L-leucine biosynthesis; L-leucine from 3-methyl-2-oxobutanoate: step 2/4. Its function is as follows. Catalyzes the isomerization between 2-isopropylmalate and 3-isopropylmalate, via the formation of 2-isopropylmaleate. The sequence is that of 3-isopropylmalate dehydratase small subunit from Alkalilimnicola ehrlichii (strain ATCC BAA-1101 / DSM 17681 / MLHE-1).